The sequence spans 349 residues: MAPTAPPILDFSPFYGTDGAAKAKLVQQVRESCEYNGFFQITGHRIPRELQVRVMDAAKRFFALPLEEKMAIDKNLNSFNRGYELLRSQMLEVGTAPELKEGLYIGEEIGADHPYYINGRLNSGPNQWPATVPDAQEFRETSMEYYHAVYELAKDVLAVLALTLDVEESFFDPLTEGGVATMRMLHYPSQPKDEDEKLNRGIGAHTDFGCITLLLQDEVDGLQVLDAPSGQWLDVQPVLGAYVVNLGDLMMRMANDRYKSNIHRVINKSGRERYSIPFFFSGNPDHVCKCLPNCCKAGEQPKYPPITVEDMVRGAYKQSYGRAEAYKKELAEKAKAHKIEAASATAMVS.

Positions 178–282 constitute a Fe2OG dioxygenase domain; that stretch reads GVATMRMLHY…RYSIPFFFSG (105 aa). Fe cation is bound by residues histidine 205, aspartate 207, and histidine 263. A 2-oxoglutarate-binding site is contributed by arginine 273.

The protein belongs to the iron/ascorbate-dependent oxidoreductase family. Requires Fe(2+) as cofactor.

In terms of biological role, 2-oxoglutarate-Fe(II) type oxidoreductase, part of the hnx cluster involved in the purine degradation. The nicotinate hydroxylase hnxS accepts nicotinate as a substrate and catalyzes the first step of nicotinate catabolism. The major facilitator-type transporters hxnP and hxnZ are probably involved in the uptake of nicotinate-derived metabolites, and the oxidoreductases hxnT and hxnY in the further metabolism of 6-OH nicotinic acid. The sequence is that of 2-oxoglutarate-Fe(II) type oxidoreductase hxnY from Emericella nidulans (strain FGSC A4 / ATCC 38163 / CBS 112.46 / NRRL 194 / M139) (Aspergillus nidulans).